The following is a 363-amino-acid chain: Phosphatidylinositol transfer protein sfh-5 (363 aa).

Positions 1–84 are disordered; sequence MSTQPSDSAE…SPADIKDSVS (84 aa). Over residues 36 to 46 the composition is skewed to basic and acidic residues; sequence DAAKHAEEEPK. Over residues 64-76 the composition is skewed to low complexity; the sequence is KPAAAPAQEADSP. Positions 180–354 constitute a CRAL-TRIO domain; it reads AGDEPAVDEP…EYGGKGADLK (175 aa). Y200, R220, H253, Y255, and K289 together coordinate heme.

Belongs to the SFH5 family. Heme b is required as a cofactor.

It localises to the cytoplasm. The protein resides in the endoplasmic reticulum membrane. It is found in the microsome membrane. The catalysed reaction is a 1,2-diacyl-sn-glycero-3-phospho-(1D-myo-inositol)(in) = a 1,2-diacyl-sn-glycero-3-phospho-(1D-myo-inositol)(out). In terms of biological role, non-classical phosphatidylinositol (PtdIns) transfer protein (PITP), which exhibits PtdIns-binding/transfer activity in the absence of detectable PtdCho-binding/transfer activity. Regulates PtdIns(4,5)P2 homeostasis at the plasma membrane. Heme-binding protein that may play a role in organic oxidant-induced stress responses. This is Phosphatidylinositol transfer protein sfh-5 (sfh-5) from Neurospora crassa (strain ATCC 24698 / 74-OR23-1A / CBS 708.71 / DSM 1257 / FGSC 987).